We begin with the raw amino-acid sequence, 161 residues long: Cyclic pyranopterin monophosphate synthase (161 aa).

Substrate contacts are provided by residues 73-75 (LCH) and 110-111 (ME). Aspartate 125 is a catalytic residue.

Belongs to the MoaC family. In terms of assembly, homohexamer; trimer of dimers.

It carries out the reaction (8S)-3',8-cyclo-7,8-dihydroguanosine 5'-triphosphate = cyclic pyranopterin phosphate + diphosphate. Its pathway is cofactor biosynthesis; molybdopterin biosynthesis. In terms of biological role, catalyzes the conversion of (8S)-3',8-cyclo-7,8-dihydroguanosine 5'-triphosphate to cyclic pyranopterin monophosphate (cPMP). The sequence is that of Cyclic pyranopterin monophosphate synthase from Pseudomonas savastanoi pv. phaseolicola (strain 1448A / Race 6) (Pseudomonas syringae pv. phaseolicola (strain 1448A / Race 6)).